The chain runs to 464 residues: Cyclic 2,3-diphosphoglycerate synthetase (464 aa).

Belongs to the cyclic 2,3-diphosphoglycerate synthetase family.

The protein resides in the cytoplasm. It catalyses the reaction (2R)-2,3-bisphosphoglycerate + ATP + H(+) = cyclic (2R)-2,3-bisphosphoglycerate + ADP + phosphate. Activity decreases in response to phosphate limitation. Catalyzes the formation of cyclic 2,3-diphosphoglycerate (cDPG) by formation of an intramolecular phosphoanhydride bond at the expense of ATP. Not able to catalyze cDPG hydrolysis. May be involved in osmotic balance. This Methanothermobacter thermautotrophicus (strain ATCC 29096 / DSM 1053 / JCM 10044 / NBRC 100330 / Delta H) (Methanobacterium thermoautotrophicum) protein is Cyclic 2,3-diphosphoglycerate synthetase (cpgS).